Here is a 298-residue protein sequence, read N- to C-terminus: MQSVATNNITKTRNAHWRDYLELTKPRVVALLLLTAVVGMCLATEELVSLKVLVPALTGIGLMSAAAAAINHLVDRHIDAKMARTLRRPLPQGNLSPAKVTTFAASIGVIGFVTLYAWVNPLTAWLTFASMVGYAVVYTMFLKRATPQNIVIGGLAGAAPPLLGWTSVTNEINAPAVLLVMIIFTWTPPHFWALAVHRAKDYARAKVPMLPVTHGIEFTKTCIFLYTVLLTVVCLMPFLIGMTGMIYLVGVSVLNAIFLAYAWKLKYSPSKKTAFNMFAFSIWHLMLLFVILLVDHYV.

9 helical membrane passes run 28–48 (VVALLLLTAVVGMCLATEELV), 50–70 (LKVLVPALTGIGLMSAAAAAI), 95–117 (LSPAKVTTFAASIGVIGFVTLYA), 121–138 (PLTAWLTFASMVGYAVVY), 149–169 (NIVIGGLAGAAPPLLGWTSVT), 176–196 (AVLLVMIIFTWTPPHFWALAV), 222–242 (CIFLYTVLLTVVCLMPFLIGM), 243–263 (TGMIYLVGVSVLNAIFLAYAW), and 274–294 (AFNMFAFSIWHLMLLFVILLV).

This sequence belongs to the UbiA prenyltransferase family. Protoheme IX farnesyltransferase subfamily.

The protein localises to the cell inner membrane. The enzyme catalyses heme b + (2E,6E)-farnesyl diphosphate + H2O = Fe(II)-heme o + diphosphate. It functions in the pathway porphyrin-containing compound metabolism; heme O biosynthesis; heme O from protoheme: step 1/1. Functionally, converts heme B (protoheme IX) to heme O by substitution of the vinyl group on carbon 2 of heme B porphyrin ring with a hydroxyethyl farnesyl side group. The protein is Protoheme IX farnesyltransferase of Idiomarina loihiensis (strain ATCC BAA-735 / DSM 15497 / L2-TR).